A 238-amino-acid chain; its full sequence is Purine nucleoside phosphorylase DeoD-type (238 aa).

His-4 is a binding site for a purine D-ribonucleoside. Residues Gly-20, Arg-24, Arg-43, and 87–90 (RIGS) each bind phosphate. A purine D-ribonucleoside is bound by residues 181–183 (EME) and 205–206 (SD). The Proton donor role is filled by Asp-206.

This sequence belongs to the PNP/UDP phosphorylase family. As to quaternary structure, homohexamer; trimer of homodimers.

It carries out the reaction a purine D-ribonucleoside + phosphate = a purine nucleobase + alpha-D-ribose 1-phosphate. The enzyme catalyses a purine 2'-deoxy-D-ribonucleoside + phosphate = a purine nucleobase + 2-deoxy-alpha-D-ribose 1-phosphate. Its function is as follows. Catalyzes the reversible phosphorolytic breakdown of the N-glycosidic bond in the beta-(deoxy)ribonucleoside molecules, with the formation of the corresponding free purine bases and pentose-1-phosphate. This Mycoplasma genitalium (strain ATCC 33530 / DSM 19775 / NCTC 10195 / G37) (Mycoplasmoides genitalium) protein is Purine nucleoside phosphorylase DeoD-type.